The sequence spans 119 residues: Ribonuclease P protein component (119 aa).

The protein belongs to the RnpA family. In terms of assembly, consists of a catalytic RNA component (M1 or rnpB) and a protein subunit.

The enzyme catalyses Endonucleolytic cleavage of RNA, removing 5'-extranucleotides from tRNA precursor.. Functionally, RNaseP catalyzes the removal of the 5'-leader sequence from pre-tRNA to produce the mature 5'-terminus. It can also cleave other RNA substrates such as 4.5S RNA. The protein component plays an auxiliary but essential role in vivo by binding to the 5'-leader sequence and broadening the substrate specificity of the ribozyme. This Borreliella burgdorferi (strain ATCC 35210 / DSM 4680 / CIP 102532 / B31) (Borrelia burgdorferi) protein is Ribonuclease P protein component.